The following is a 470-amino-acid chain: Ribulose bisphosphate carboxylase large chain (470 aa).

K5 is subject to N6,N6,N6-trimethyllysine. Residues N114 and T164 each coordinate substrate. K166 acts as the Proton acceptor in catalysis. K168 is a substrate binding site. Positions 192, 194, and 195 each coordinate Mg(2+). At K192 the chain carries N6-carboxylysine. H285 serves as the catalytic Proton acceptor. Residues R286, H318, and S370 each contribute to the substrate site.

It belongs to the RuBisCO large chain family. Type I subfamily. As to quaternary structure, heterohexadecamer of 8 large chains and 8 small chains; disulfide-linked. The disulfide link is formed within the large subunit homodimers. Requires Mg(2+) as cofactor. The disulfide bond which can form in the large chain dimeric partners within the hexadecamer appears to be associated with oxidative stress and protein turnover.

It localises to the plastid. The protein localises to the chloroplast. It carries out the reaction 2 (2R)-3-phosphoglycerate + 2 H(+) = D-ribulose 1,5-bisphosphate + CO2 + H2O. The enzyme catalyses D-ribulose 1,5-bisphosphate + O2 = 2-phosphoglycolate + (2R)-3-phosphoglycerate + 2 H(+). RuBisCO catalyzes two reactions: the carboxylation of D-ribulose 1,5-bisphosphate, the primary event in carbon dioxide fixation, as well as the oxidative fragmentation of the pentose substrate in the photorespiration process. Both reactions occur simultaneously and in competition at the same active site. The sequence is that of Ribulose bisphosphate carboxylase large chain from Kigelia africana (Sausage tree).